A 320-amino-acid chain; its full sequence is Arabinan endo-1,5-alpha-L-arabinosidase C (320 aa).

A signal peptide spans Met-1–Ala-15. Residue Asp-31 is the Proton acceptor of the active site. N-linked (GlcNAc...) asparagine glycosylation is found at Asn-126 and Asn-190. Catalysis depends on Glu-198, which acts as the Proton donor.

The protein belongs to the glycosyl hydrolase 43 family.

It localises to the secreted. It catalyses the reaction Endohydrolysis of (1-&gt;5)-alpha-arabinofuranosidic linkages in (1-&gt;5)-arabinans.. It participates in glycan metabolism; L-arabinan degradation. Endo-1,5-alpha-L-arabinanase involved in degradation of pectin. Its preferred substrate is linear 1,5-alpha-L-arabinan. This is Arabinan endo-1,5-alpha-L-arabinosidase C (abnC) from Emericella nidulans (strain FGSC A4 / ATCC 38163 / CBS 112.46 / NRRL 194 / M139) (Aspergillus nidulans).